The sequence spans 1373 residues: DNA-directed RNA polymerase subunit beta'' (1373 aa).

Positions 220, 291, 298, and 301 each coordinate Zn(2+).

Belongs to the RNA polymerase beta' chain family. RpoC2 subfamily. In terms of assembly, in plastids the minimal PEP RNA polymerase catalytic core is composed of four subunits: alpha, beta, beta', and beta''. When a (nuclear-encoded) sigma factor is associated with the core the holoenzyme is formed, which can initiate transcription. Requires Zn(2+) as cofactor.

It localises to the plastid. The protein resides in the chloroplast. The catalysed reaction is RNA(n) + a ribonucleoside 5'-triphosphate = RNA(n+1) + diphosphate. In terms of biological role, DNA-dependent RNA polymerase catalyzes the transcription of DNA into RNA using the four ribonucleoside triphosphates as substrates. This Silene latifolia (White campion) protein is DNA-directed RNA polymerase subunit beta''.